Here is a 99-residue protein sequence, read N- to C-terminus: uncharacterized protein (99 aa).

Residues 50–77 form a disordered region; sequence SAHWEDARSSGGTSPIRARAGSEGRGCQ.

This is an uncharacterized protein from Homo sapiens (Human).